Reading from the N-terminus, the 108-residue chain is DNA-binding protein HBbu (108 aa).

It belongs to the bacterial histone-like protein family.

Functionally, histone-like DNA-binding protein which is capable of wrapping DNA to stabilize it, and thus to prevent its denaturation under extreme environmental conditions. The sequence is that of DNA-binding protein HBbu (hbb) from Borrelia turicatae.